The sequence spans 437 residues: Replication factor C large subunit (437 aa).

48–55 (GPPGVGKT) provides a ligand contact to ATP. Residues 410 to 437 (TQASKPTSEEKAEKSKKYYPKRSSSRKT) are disordered. Residues 416 to 425 (TSEEKAEKSK) show a composition bias toward basic and acidic residues. Over residues 426–437 (KYYPKRSSSRKT) the composition is skewed to basic residues.

It belongs to the activator 1 small subunits family. RfcL subfamily. Heteromultimer composed of small subunits (RfcS) and large subunits (RfcL).

Its function is as follows. Part of the RFC clamp loader complex which loads the PCNA sliding clamp onto DNA. The protein is Replication factor C large subunit of Sulfolobus acidocaldarius (strain ATCC 33909 / DSM 639 / JCM 8929 / NBRC 15157 / NCIMB 11770).